The following is a 290-amino-acid chain: F-box protein PP2-A13 (290 aa).

Residues 21–67 enclose the F-box domain; it reads RKLRLVDLPENCVALIMTRLDPPEICRLARLNRMFRRASSADFIWES.

As to quaternary structure, part of a SCF (ASK-cullin-F-box) protein ligase complex. Interacts with SKP1A/ASK1, SKP1B/ASK2, ASK5, ASK11 and ASK13.

It localises to the nucleus. It participates in protein modification; protein ubiquitination. In terms of biological role, component of SCF(ASK-cullin-F-box) E3 ubiquitin ligase complexes, which may mediate the ubiquitination and subsequent proteasomal degradation of target proteins. This chain is F-box protein PP2-A13 (PP2A13), found in Arabidopsis thaliana (Mouse-ear cress).